A 183-amino-acid polypeptide reads, in one-letter code: Putative 3-methyladenine DNA glycosylase (183 aa).

The protein belongs to the DNA glycosylase MPG family.

The sequence is that of Putative 3-methyladenine DNA glycosylase from Rickettsia conorii (strain ATCC VR-613 / Malish 7).